A 365-amino-acid chain; its full sequence is DNA polymerase IV (365 aa).

A UmuC domain is found at 7 to 188; sequence IIHIDMDAFY…LPVNKFFGVG (182 aa). Positions 11 and 106 each coordinate Mg(2+). The active site involves Glu-107.

It belongs to the DNA polymerase type-Y family. Monomer. Mg(2+) serves as cofactor.

The protein resides in the cytoplasm. The enzyme catalyses DNA(n) + a 2'-deoxyribonucleoside 5'-triphosphate = DNA(n+1) + diphosphate. Its function is as follows. Poorly processive, error-prone DNA polymerase involved in untargeted mutagenesis. Copies undamaged DNA at stalled replication forks, which arise in vivo from mismatched or misaligned primer ends. These misaligned primers can be extended by PolIV. Exhibits no 3'-5' exonuclease (proofreading) activity. May be involved in translesional synthesis, in conjunction with the beta clamp from PolIII. The chain is DNA polymerase IV from Clostridioides difficile (strain 630) (Peptoclostridium difficile).